The following is a 143-amino-acid chain: Transcriptional regulator MraZ (143 aa).

SpoVT-AbrB domains lie at 5–47 and 76–119; these read EYRH…PQSE and ASEC…SKTL.

The protein belongs to the MraZ family. Forms oligomers.

It is found in the cytoplasm. The protein localises to the nucleoid. In Shouchella clausii (strain KSM-K16) (Alkalihalobacillus clausii), this protein is Transcriptional regulator MraZ.